The sequence spans 1164 residues: WASH complex subunit 5 (1164 aa).

It belongs to the strumpellin family. As to quaternary structure, probable component of the WASH complex.

The protein is WASH complex subunit 5 of Dictyostelium discoideum (Social amoeba).